A 557-amino-acid chain; its full sequence is MGNHKAALTKQVFTFASELYAYGVREVVISPGSRSTPLALAFEAHPNIKTWIHPDERSAAFFAVGLIKGSERPVAILCTSGTAAANYTPAIAESQISRIPLIVLTSDRPHELRSVGAPQAINQVNMFNNYVSYEFDMPIADDSKETINAIYYQMQIASQYLYGPHKGPIHFNLPFRDPLTPDLNATELLTSEMKILPHYQKSIDASALRHILNKKKGLIIVGDMQHQEVDQILTYSTIYDLPILADPLSHLRKFDHPNVICTYDLLFRSGLDLNVDFVIRVGKPVISKKLNQWLKKTDAFQILVQNNDKIDVFPIAPDISYEISANDFFRSLMEDTTINRVSWLEKWQCLEKKGRKEIKCYLEQATDESAFVGELIKKTSEKDALFISNSMPIRDVDNLLLNKNIDVYANRGANGIDGIVSTALGMAVHKRITLLIGDLSFYHDMNGLLMSKLNNIQMNIVLLNNDGGGIFSYLPQKESATDYFERLFGTPTGLDFEYTAKLYQFDFKRFNSVSEFKNATLLSETSTIYELITNREDNFKQHQILYQKLSEMIHDTL.

This sequence belongs to the TPP enzyme family. MenD subfamily. In terms of assembly, homodimer. Mg(2+) serves as cofactor. The cofactor is Mn(2+). Requires thiamine diphosphate as cofactor.

The catalysed reaction is isochorismate + 2-oxoglutarate + H(+) = 5-enolpyruvoyl-6-hydroxy-2-succinyl-cyclohex-3-ene-1-carboxylate + CO2. Its pathway is quinol/quinone metabolism; 1,4-dihydroxy-2-naphthoate biosynthesis; 1,4-dihydroxy-2-naphthoate from chorismate: step 2/7. The protein operates within quinol/quinone metabolism; menaquinone biosynthesis. Catalyzes the thiamine diphosphate-dependent decarboxylation of 2-oxoglutarate and the subsequent addition of the resulting succinic semialdehyde-thiamine pyrophosphate anion to isochorismate to yield 2-succinyl-5-enolpyruvyl-6-hydroxy-3-cyclohexene-1-carboxylate (SEPHCHC). This chain is 2-succinyl-5-enolpyruvyl-6-hydroxy-3-cyclohexene-1-carboxylate synthase, found in Staphylococcus aureus (strain Mu3 / ATCC 700698).